A 509-amino-acid polypeptide reads, in one-letter code: MKRGRLPSSSEDSDDNGSLSTTWSQNSRSQHRRSSCSRPEDRKPSEVFRTDLITAMKLHDSYQLNPDEYYVLADPWRQEWEKGVQVPVSPGTIPQPVARVVSEEKSLMFIRPKKYIVSSGSEPPELGYVDIRTLADSVCRYDLNDMDAAWLELTNEEFKEMGMPELDEYTMERVLEEFEQRCYDNMNHAIETEEGLGIEYDEYVVCDVCQSPDGEDGNEMVFCDKCNICVHQACYGILKVPEGSWLCRTCALGVQPKCLLCPKKGGAMKPTRSGTKWVHVSCALWIPEVSIGSPEKMEPITKVSHIPSSRWALVCSLCNEKFGASIQCSVKNCRTAFHVTCAFDRGLEMKTILAENDEVKFKSYCPKHSSHRKAEEGLGEGTAQENGAPECSPRDPLEPFAGLEQNREEAHRVSVRKQKLQQLEDEFYTFVNLLDVARALRLPEEVVDFLYQYWKLKRKVNFNKPLITPKKDEEDNLAKREQDVLFRRLQLFTHLRQDLERVMTDTDTL.

Positions 1–45 (MKRGRLPSSSEDSDDNGSLSTTWSQNSRSQHRRSSCSRPEDRKPS) are disordered. The interaction with KAT7/HBO1 and histones stretch occupies residues 60–80 (DSYQLNPDEYYVLADPWRQEW). The segment at 80–188 (WEKGVQVPVS…EQRCYDNMNH (109 aa)) is interaction with histones. Ser-89 is modified (phosphoserine). Position 92 is a phosphothreonine (Thr-92). Lys-114 participates in a covalent cross-link: Glycyl lysine isopeptide (Lys-Gly) (interchain with G-Cter in SUMO2). The PHD-type 1 zinc-finger motif lies at 203–253 (YVVCDVCQSPDGEDGNEMVFCDKCNICVHQACYGILKVPEGSWLCRTCALG). The C2HC pre-PHD-type zinc finger occupies 255-289 (QPKCLLCPKKGGAMKPTRSGTKWVHVSCALWIPEV). The segment at 313-369 (LVCSLCNEKFGASIQCSVKNCRTAFHVTCAFDRGLEMKTILAENDEVKFKSYCPKHS) adopts a PHD-type 2 zinc-finger fold. The segment at 373-399 (KAEEGLGEGTAQENGAPECSPRDPLEP) is disordered.

The protein belongs to the JADE family. Component of the HBO1 complex composed at least of ING4 or ING5, KAT7/HBO1, MEAF6, and one of JADE1, JADE2 and JADE3. Interacts with NPHP4.

It localises to the nucleus. Its subcellular location is the chromosome. The protein resides in the cytoplasm. The protein localises to the cytoskeleton. It is found in the cilium basal body. Its function is as follows. Scaffold subunit of some HBO1 complexes, which have a histone H4 acetyltransferase activity. Plays a key role in HBO1 complex by directing KAT7/HBO1 specificity towards histone H4 acetylation (H4K5ac, H4K8ac and H4K12ac), regulating DNA replication initiation, regulating DNA replication initiation. May also promote acetylation of nucleosomal histone H4 by KAT5. Promotes apoptosis. May act as a renal tumor suppressor. Negatively regulates canonical Wnt signaling; at least in part, cooperates with NPHP4 in this function. This Bos taurus (Bovine) protein is Protein Jade-1 (JADE1).